The chain runs to 401 residues: Lsg locus putative protein 1 (401 aa).

The next 11 membrane-spanning stretches (helical) occupy residues 8–28 (VIYLVGELSSKLVPFLLLPYL), 36–56 (GYGSLSYYQTFLSLFLIVVSL), 87–107 (IIGSIILIGCWIAQSEILFYA), 132–152 (SYAFIQFSLTVTGAVFTVALL), 162–182 (KRILAILLSNLVVWFFSYFLY), 199–219 (ALFYILGFGLPLILHYASFFL), 237–257 (LGLYAMGAQLALVVSIAIQAL), 282–302 (WALFSFLLIPIPALIMWIIPE), 320–340 (FILFLISTTLSIPYLILVNYL), 352–372 (CSVLSTIIYVASLVALTFTEI), and 374–394 (YIPYAGIIGSLSIIPILYFMT).

It belongs to the polysaccharide synthase family. HI_0867/HI_1700 subfamily.

The protein localises to the cell membrane. The chain is Lsg locus putative protein 1 from Haemophilus influenzae (strain ATCC 51907 / DSM 11121 / KW20 / Rd).